Here is a 128-residue protein sequence, read N- to C-terminus: Disintegrin lebein-2-alpha (128 aa).

Positions Met1–Ser20 are cleaved as a signal peptide. Positions Ile21–Ala46 are excised as a propeptide. The region spanning Met47–Ser111 is the Disintegrin domain. 4 disulfide bridges follow: Cys53-Cys76, Cys67-Cys73, Cys72-Cys97, and Cys85-Cys104. A Cell attachment site; atypical (MLD) motif is present at residues Met89–Asp91. Residues Glu112 to Met128 constitute a propeptide that is removed on maturation.

Belongs to the disintegrin family. Dimeric disintegrin subfamily. Heterodimer with subunit beta; disulfide-linked. As to expression, expressed by the venom gland.

The protein resides in the secreted. Its function is as follows. Inhibits ADP-induced human platelet aggregation. Antagonist of alpha-IIb/beta-3 (ITGA2B/ITGB3). Also avidly binds to the laminin-binding beta-1 integrins (alpha-3/beta-1 (ITGA3/ITGB1), alpha-6/beta-1 (ITGA6/ITGB1), and alpha-7/beta-1 (ITGA7/ITGB1)) in an RGD-independent manner. The polypeptide is Disintegrin lebein-2-alpha (Macrovipera lebetinus (Levantine viper)).